The primary structure comprises 436 residues: Gamma-glutamyl phosphate reductase (436 aa).

It belongs to the gamma-glutamyl phosphate reductase family.

The protein localises to the cytoplasm. It carries out the reaction L-glutamate 5-semialdehyde + phosphate + NADP(+) = L-glutamyl 5-phosphate + NADPH + H(+). The protein operates within amino-acid biosynthesis; L-proline biosynthesis; L-glutamate 5-semialdehyde from L-glutamate: step 2/2. Catalyzes the NADPH-dependent reduction of L-glutamate 5-phosphate into L-glutamate 5-semialdehyde and phosphate. The product spontaneously undergoes cyclization to form 1-pyrroline-5-carboxylate. The sequence is that of Gamma-glutamyl phosphate reductase from Prochlorococcus marinus (strain MIT 9515).